A 925-amino-acid polypeptide reads, in one-letter code: Aspulvinone E synthetase melA (925 aa).

Residues 11 to 434 (ETAAARNGDG…GGRAKETIII (424 aa)) are adenylation (A) domain. Residues 564 to 644 (SPKNDFEKGL…ELAAALDNLY (81 aa)) enclose the Carrier domain. Ser601 is subject to O-(pantetheine 4'-phosphoryl)serine. Residues 663–923 (PLWLVHPGAG…KILRSALAER (261 aa)) form a thioesterase (TE) domain region.

Belongs to the ATP-dependent AMP-binding enzyme family.

It localises to the cytoplasm. Its function is as follows. Nonribosomal peptide synthase; part of the gene cluster that mediates the biosynthesis of Asp-melanin, a pigment that confers resistance against UV light and hampers phagocytosis by soil amoeba. The nonribosomal peptide synthase melA converts 4-hydroxyphenylpyruvate (4-HPPA) to aspulvinone E. The tyrosinase tyrP then performs hydroxylations of both aromatic moieties of aspulvinone E. The product of tyrP is highly unstable, and, due to the high reactivity of methides and ortho-diquinones, the polymeric Asp-melanin forms spontaneously. The sequence is that of Aspulvinone E synthetase melA from Aspergillus terreus.